Reading from the N-terminus, the 945-residue chain is Leucine--tRNA ligase (945 aa).

The 'HIGH' region signature appears at 43–53; that stretch reads PYPNGAIHIGH. Residues 638-642 carry the 'KMSKS' region motif; sequence KMSKS. Lys641 serves as a coordination point for ATP.

It belongs to the class-I aminoacyl-tRNA synthetase family.

The protein resides in the cytoplasm. The catalysed reaction is tRNA(Leu) + L-leucine + ATP = L-leucyl-tRNA(Leu) + AMP + diphosphate. The chain is Leucine--tRNA ligase from Pyrobaculum arsenaticum (strain DSM 13514 / JCM 11321 / PZ6).